A 644-amino-acid chain; its full sequence is Tripeptidyl-peptidase sed1 (644 aa).

The first 18 residues, Met-1–Ala-18, serve as a signal peptide directing secretion. Residues Ser-19–Phe-196 constitute a propeptide, removed in mature form. One can recognise a Peptidase S53 domain in the interval Ala-224 to Leu-643. An N-linked (GlcNAc...) asparagine glycan is attached at Asn-235. Active-site charge relay system residues include Glu-300 and Asp-304. N-linked (GlcNAc...) asparagine glycosylation is found at Asn-326, Asn-332, and Asn-519. The active-site Charge relay system is the Ser-561. The Ca(2+) site is built by Asp-602, Ile-603, Gly-621, and Asp-623.

It depends on Ca(2+) as a cofactor. N-glycosylated.

Its subcellular location is the secreted. The protein localises to the extracellular space. It carries out the reaction Release of an N-terminal tripeptide from a polypeptide.. Functionally, secreted tripeptidyl-peptidase which degrades proteins at acidic pHs and is involved in virulence. The protein is Tripeptidyl-peptidase sed1 (sed1) of Aspergillus fumigatus (strain ATCC MYA-4609 / CBS 101355 / FGSC A1100 / Af293) (Neosartorya fumigata).